Reading from the N-terminus, the 339-residue chain is Anthranilate phosphoribosyltransferase (339 aa).

5-phospho-alpha-D-ribose 1-diphosphate-binding positions include Gly-82, 85–86 (GD), Thr-90, 92–95 (NIST), 110–118 (KHGNRSASG), and Ser-122. Gly-82 provides a ligand contact to anthranilate. Ser-94 contacts Mg(2+). Asn-113 lines the anthranilate pocket. Arg-168 serves as a coordination point for anthranilate. The Mg(2+) site is built by Asp-226 and Glu-227.

Belongs to the anthranilate phosphoribosyltransferase family. Homodimer. Requires Mg(2+) as cofactor.

The catalysed reaction is N-(5-phospho-beta-D-ribosyl)anthranilate + diphosphate = 5-phospho-alpha-D-ribose 1-diphosphate + anthranilate. Its pathway is amino-acid biosynthesis; L-tryptophan biosynthesis; L-tryptophan from chorismate: step 2/5. Functionally, catalyzes the transfer of the phosphoribosyl group of 5-phosphorylribose-1-pyrophosphate (PRPP) to anthranilate to yield N-(5'-phosphoribosyl)-anthranilate (PRA). The polypeptide is Anthranilate phosphoribosyltransferase (Methanosphaerula palustris (strain ATCC BAA-1556 / DSM 19958 / E1-9c)).